The primary structure comprises 694 residues: Polyphosphate kinase (694 aa).

N45 contacts ATP. Positions 367 and 397 each coordinate Mg(2+). H427 acts as the Phosphohistidine intermediate in catalysis. 3 residues coordinate ATP: Y460, R553, and H580.

Belongs to the polyphosphate kinase 1 (PPK1) family. The cofactor is Mg(2+). Post-translationally, an intermediate of this reaction is the autophosphorylated ppk in which a phosphate is covalently linked to a histidine residue through a N-P bond.

The enzyme catalyses [phosphate](n) + ATP = [phosphate](n+1) + ADP. Catalyzes the reversible transfer of the terminal phosphate of ATP to form a long-chain polyphosphate (polyP). This chain is Polyphosphate kinase, found in Campylobacter jejuni subsp. jejuni serotype O:6 (strain 81116 / NCTC 11828).